The sequence spans 42 residues: Alpha-conotoxin VnIB (42 aa).

Positions 1 to 22 (ASDGRNAAADDKASDPIALTVR) are excised as a propeptide. Cystine bridges form between Cys25-Cys31 and Cys26-Cys38. The residue at position 39 (Gly39) is a Glycine amide.

The protein belongs to the conotoxin A superfamily. As to expression, expressed by the venom duct.

The protein resides in the secreted. In terms of biological role, alpha-conotoxins act on postsynaptic membranes, they bind to the nicotinic acetylcholine receptors (nAChR) and thus inhibit them. This toxin potently and selectively inhibits human and rat alpha-6-beta-4/CHRNA6-CHRNB4 nAChR (IC(50)=12 nM on rat nAChR). It exhibits rapid binding and unbinding at this receptor. It also shows activity on rat alpha-6-beta-4/CHRNA6-CHRNB4 (IC(50)=12 nM), human alpha-6/alpha-3-beta-4 (CHRNA6/CHRNA3-CHRNB4) (IC(50)=5.3 nM), rat alpha-6/alpha-3-beta-4 (CHRNA6/CHRNA3-CHRNB4) (IC(50)=18 nM), rat alpha-3-beta-4/CHRNA3-CHRNB4 (IC(50)=320 nM), and rat alpha-6/alpha-3-beta-2-beta-3 (CHRNA6/CHRNA3-CHRNB2-CHRNB3) (IC(50)=4 uM). In Conus ventricosus (Mediterranean cone), this protein is Alpha-conotoxin VnIB.